The chain runs to 335 residues: Ketol-acid reductoisomerase (NADP(+)) (335 aa).

The KARI N-terminal Rossmann domain occupies 1–182 (MATIIYDNET…GATRAGVYET (182 aa)). Residues 25-28 (YGSQ), Arg48, Ser51, Ser53, and 83-86 (DEKQ) contribute to the NADP(+) site. His108 is an active-site residue. Gly134 is an NADP(+) binding site. Residues 183-328 (TFREETETDL…KEIRANIPWL (146 aa)) form the KARI C-terminal knotted domain. Asp191, Glu195, Glu227, and Glu231 together coordinate Mg(2+). Substrate is bound at residue Ser252.

It belongs to the ketol-acid reductoisomerase family. Mg(2+) is required as a cofactor.

It carries out the reaction (2R)-2,3-dihydroxy-3-methylbutanoate + NADP(+) = (2S)-2-acetolactate + NADPH + H(+). The enzyme catalyses (2R,3R)-2,3-dihydroxy-3-methylpentanoate + NADP(+) = (S)-2-ethyl-2-hydroxy-3-oxobutanoate + NADPH + H(+). Its pathway is amino-acid biosynthesis; L-isoleucine biosynthesis; L-isoleucine from 2-oxobutanoate: step 2/4. It participates in amino-acid biosynthesis; L-valine biosynthesis; L-valine from pyruvate: step 2/4. Involved in the biosynthesis of branched-chain amino acids (BCAA). Catalyzes an alkyl-migration followed by a ketol-acid reduction of (S)-2-acetolactate (S2AL) to yield (R)-2,3-dihydroxy-isovalerate. In the isomerase reaction, S2AL is rearranged via a Mg-dependent methyl migration to produce 3-hydroxy-3-methyl-2-ketobutyrate (HMKB). In the reductase reaction, this 2-ketoacid undergoes a metal-dependent reduction by NADPH to yield (R)-2,3-dihydroxy-isovalerate. In Methanosarcina acetivorans (strain ATCC 35395 / DSM 2834 / JCM 12185 / C2A), this protein is Ketol-acid reductoisomerase (NADP(+)).